The following is a 442-amino-acid chain: Betaine reductase complex component B subunit alpha (442 aa).

In terms of assembly, heterotetramer of two alpha and two beta subunits. Component of the betaine reductase complex, together with components A and C. PB is substrate specific.

The enzyme catalyses acetyl phosphate + trimethylamine + [thioredoxin]-disulfide + H2O = glycine betaine + [thioredoxin]-dithiol + phosphate + H(+). In terms of biological role, in the first step of betaine reductase, the substrate is bound to component PB via a Schiff base intermediate. Then the PB-activated substrate is nucleophilically attacked by the selenol anion of component PA to transform it to a carboxymethylated selenoether and the respective amine. By action of component PC, acetyl phosphate is formed, leaving component PA in its oxidized state. Finally component PA becomes reduced by the thioredoxin system to start a new catalytic cycle of reductive deamination. This is Betaine reductase complex component B subunit alpha (grdI) from Peptoclostridium acidaminophilum (Eubacterium acidaminophilum).